Consider the following 907-residue polypeptide: Valine--tRNA ligase (907 aa).

The 'HIGH' region motif lies at 45-55 (PNVTGSLHMGH). Residues 554–558 (KMSKS) carry the 'KMSKS' region motif. Lysine 557 contributes to the ATP binding site. Residues 838-870 (GQLIDLEAERARLMKDVSKIEQDIEKLSAKLSN) are a coiled coil.

The protein belongs to the class-I aminoacyl-tRNA synthetase family. ValS type 1 subfamily. In terms of assembly, monomer.

The protein localises to the cytoplasm. The catalysed reaction is tRNA(Val) + L-valine + ATP = L-valyl-tRNA(Val) + AMP + diphosphate. Catalyzes the attachment of valine to tRNA(Val). As ValRS can inadvertently accommodate and process structurally similar amino acids such as threonine, to avoid such errors, it has a 'posttransfer' editing activity that hydrolyzes mischarged Thr-tRNA(Val) in a tRNA-dependent manner. The protein is Valine--tRNA ligase of Bartonella henselae (strain ATCC 49882 / DSM 28221 / CCUG 30454 / Houston 1) (Rochalimaea henselae).